Here is a 469-residue protein sequence, read N- to C-terminus: ATP synthase subunit beta (469 aa).

155-162 (GGAGVGKT) is a binding site for ATP.

The protein belongs to the ATPase alpha/beta chains family. In terms of assembly, F-type ATPases have 2 components, CF(1) - the catalytic core - and CF(0) - the membrane proton channel. CF(1) has five subunits: alpha(3), beta(3), gamma(1), delta(1), epsilon(1). CF(0) has three main subunits: a(1), b(2) and c(9-12). The alpha and beta chains form an alternating ring which encloses part of the gamma chain. CF(1) is attached to CF(0) by a central stalk formed by the gamma and epsilon chains, while a peripheral stalk is formed by the delta and b chains.

The protein resides in the cell inner membrane. The enzyme catalyses ATP + H2O + 4 H(+)(in) = ADP + phosphate + 5 H(+)(out). Functionally, produces ATP from ADP in the presence of a proton gradient across the membrane. The catalytic sites are hosted primarily by the beta subunits. The protein is ATP synthase subunit beta of Syntrophobacter fumaroxidans (strain DSM 10017 / MPOB).